Reading from the N-terminus, the 322-residue chain is Tetraacyldisaccharide 4'-kinase (322 aa).

40–47 (CVGGTGKT) contacts ATP.

It belongs to the LpxK family.

It catalyses the reaction a lipid A disaccharide + ATP = a lipid IVA + ADP + H(+). It participates in glycolipid biosynthesis; lipid IV(A) biosynthesis; lipid IV(A) from (3R)-3-hydroxytetradecanoyl-[acyl-carrier-protein] and UDP-N-acetyl-alpha-D-glucosamine: step 6/6. Functionally, transfers the gamma-phosphate of ATP to the 4'-position of a tetraacyldisaccharide 1-phosphate intermediate (termed DS-1-P) to form tetraacyldisaccharide 1,4'-bis-phosphate (lipid IVA). The polypeptide is Tetraacyldisaccharide 4'-kinase (Koribacter versatilis (strain Ellin345)).